A 232-amino-acid chain; its full sequence is EEF1A lysine methyltransferase 3 (232 aa).

Residues Trp57, 83 to 85, Asp104, Trp133, and Ala150 each bind S-adenosyl-L-methionine; that span reads GAG.

It belongs to the methyltransferase superfamily. METTL21 family. Interacts with members of the heat shock protein 70 and 90 families and of the TCP-1 chaperonin family, as well as with HSPD1, STIP1 and tubulin; at least some of these proteins may be methylation substrates.

The protein localises to the cytoplasm. It localises to the cytoskeleton. It is found in the microtubule organizing center. The protein resides in the centrosome. It catalyses the reaction L-lysyl-[protein] + 3 S-adenosyl-L-methionine = N(6),N(6),N(6)-trimethyl-L-lysyl-[protein] + 3 S-adenosyl-L-homocysteine + 3 H(+). The enzyme catalyses L-lysyl-[protein] + S-adenosyl-L-methionine = N(6)-methyl-L-lysyl-[protein] + S-adenosyl-L-homocysteine + H(+). The catalysed reaction is N(6)-methyl-L-lysyl-[protein] + S-adenosyl-L-methionine = N(6),N(6)-dimethyl-L-lysyl-[protein] + S-adenosyl-L-homocysteine + H(+). It carries out the reaction N(6),N(6)-dimethyl-L-lysyl-[protein] + S-adenosyl-L-methionine = N(6),N(6),N(6)-trimethyl-L-lysyl-[protein] + S-adenosyl-L-homocysteine + H(+). Functionally, protein-lysine methyltransferase that selectively mono-, di- and trimethylates 'Lys-165' of the translation elongation factors EEF1A1 and EEF1A2 in an aminoacyl-tRNA and GTP-dependent manner. EEF1A1 methylation by EEF1AKMT3 is dynamic as well as inducible by stress conditions, such as ER-stress, and plays a regulatory role on mRNA translation. In Mus musculus (Mouse), this protein is EEF1A lysine methyltransferase 3.